An 880-amino-acid chain; its full sequence is MGISSKNGPKKMGRAKTFTGCWTCRGRKVKCDLRHPHCQRCEKSNLPCGGYDIKLRWSKPMQFDPYGVPIPQNSPATTTNLSGSVDEPQYQRRNIDFVRYDEEYVYHEDMDDELTMLHTPPIEKISDNKTWIIKKFGVFKGTDKIDKQYAPRKKRNRKRVAKSLESSASISLSSLPSSSTISFPIRHIEDKLRNKGHVKTGILSANDGVPPTPNLLDYDWNNLNITGYEWISSELRDDALLSAVTLQGHHLGHTQPQEISLEENSNVVSGEEHVNAKEHGCAFEADNQGSSTLPNKAASANDKLYQQNLKLLFQKNSSNSEEPDPQALIDDVFVNIEPRSLPASDLNKITLAPPNEESRMPKSMLELTSYSSDLPPELVDIIPKTDLTVHGLARFLLNHYFNNVADKMTVVVLEKNPWKTLYFPRALMALGDLAGLGQSSNSRNALLNALLAVSCFHLQSKYPRNYKLQKYFLGLGIELRNQASNFLRLCLNTKSSIPEKYKDVLTAILSMNSIDVVWGTMADCQDHLALCEDFVESRMKLRPNISEKTKTLHRIFSFLKLIQDSTALDKVRAKEIVILPSEEDDNYKPLDTSNATTSSSEPRVDVVQEGLFREALNENDGKIHIEFVKEPITNVSADSTPSSTTPPIFTNIATESYYNKSDISKLVSKTDENIIGTDSLYGLPNSLILLFSDCVRIVRHNEYYNLTYLPVPRKFNELSLNFEKRLLKWKSEWNFHQENSEGKSFINSTAEALYHHTMSFYFSLIIYYFTMARSLNCQFLQNYVAKVLDHLNAMEELVDQKKVKIVPLIWQGFMAGCACTDENRQQEFRRWAAKLAESGVGSYWGARQVMLEVWRRRKEDEPGDNWYSVYKDWEMNLMLS.

Positions 21–48 (CWTCRGRKVKCDLRHPHCQRCEKSNLPC) form a DNA-binding region, zn(2)-C6 fungal-type.

In terms of assembly, interacts with ARG80 and MCM1.

It is found in the cytoplasm. Its subcellular location is the nucleus. Its function is as follows. With ARG80, ARG82 and MCM1, coordinates the expression of arginine anabolic and catabolic genes in response to arginine. This Saccharomyces cerevisiae (strain ATCC 204508 / S288c) (Baker's yeast) protein is Arginine metabolism regulation protein II (ARG81).